Consider the following 1044-residue polypeptide: MMAQKSQGSDNLQEGQEKSKREILKCTKSAWAPLDEWLPPDPEEESQSLTIPMLEDSKQESIQQWLDSGFFVSANENFQQVIDRTVSLYEQGMVQMTVKDYMRSLHQFSETPILSRGTSFNSCYSTASVPQSIPEWLEFWEIDPVEILLDLGFGADEPDICMQIPARFLGCGSAARGINIRVFLEAQKQRMDIENPNLYGRFRQLEILDHVTNAFSSLLSDVSILPNRAEEKAGGESVQRTSVSAAKEHRRRMGKLLRRASKQNIRRDCNPEVSESFKVKDEVFVPFTKPWDCGAELAATSINHKQNHLSLSVEHQSLQACDDLLPYPPHGLLSKQWPCSSMPAKQAPPSCVSEGSVKGRTQKENLFQTNKLKSLSHLAGKGPDSFEMEEVQSFEEETGNPLDMTSGTVGARVDRANSCQSDSSGFLEEPLEPLPLQMPSLPNSQSPAENGGRKPRDQSHSLVSSQDCQLESDGPDSKSRASMSFSSQEANALEQRASVSVMEEEFLLEAMEGPPELYIPDMACAKTTTRGECPRKDSHLWQLLPMPHAEYEVTRPTATSKYDHPLGFMVTHVTEMQDSFVRPEGAGKVQSHHNESQRSPGNDHTQDKFLHVDSEAPREEESSGFCPHTNHSLLVPESSSQCIPKHSEITPYATDLAQTSEKLIPHLHKLPGDPAQVKSRSGTLGQILPGTEAEMENLPLNTGSSRSVMTQMSSSLVSAAQRAVALGTGPRGTSLECTVCDPVTATETRLGTKARQLNDASIQTSALSNKTLTHGPQPLTKSVSLDSGFSSICPMGTCHAIPAHCCICCHHHPHCHGERQSPGPEPSVCRHCLCSLTGHQEAQFMTTLKALQDTTVRELCSCTVHEMEAMKTICQSFREYLEEIEQHLMGQQALFSRDMSEEEREEAEQLQTLREALRQQVAELEFQLGDRAQQIREGILLQLEVLTAEPPEHYSNLHQYNWIEESNGQTSCSKIHPGMAPRTVFPPDDGQEAPCSGGTQLAAFTPPTLENSTRMSPSSSAWAKLGPTPLSNCPVGEKDADVFL.

Over residues 1 to 14 the composition is skewed to polar residues; it reads MMAQKSQGSDNLQE. 4 disordered regions span residues 1–20, 230–251, 388–489, and 583–607; these read MMAQKSQGSDNLQEGQEKSK, EEKAGGESVQRTSVSAAKEHRR, MEEV…SSQE, and PEGAGKVQSHHNESQRSPGNDHTQD. Over residues 388 to 398 the composition is skewed to acidic residues; it reads MEEVQSFEEET. 2 stretches are compositionally biased toward polar residues: residues 460–469 and 480–489; these read HSLVSSQDCQ and RASMSFSSQE. The stretch at 896–937 forms a coiled coil; the sequence is SRDMSEEEREEAEQLQTLREALRQQVAELEFQLGDRAQQIRE.

This chain is Protein ITPRID1, found in Homo sapiens (Human).